Consider the following 232-residue polypeptide: LexA repressor (232 aa).

Positions 1–10 are enriched in polar residues; sequence MDDSNDSSSA. Residues 1 to 22 form a disordered region; that stretch reads MDDSNDSSSAGPDGRLHAVDPS. The segment at residues 47–67 is a DNA-binding region (H-T-H motif); it reads IREIGDAVGLTSTSSVAHQLR. Catalysis depends on for autocatalytic cleavage activity residues Ser156 and Lys193.

This sequence belongs to the peptidase S24 family. As to quaternary structure, homodimer.

The enzyme catalyses Hydrolysis of Ala-|-Gly bond in repressor LexA.. Its function is as follows. Represses a number of genes involved in the response to DNA damage (SOS response), including recA and lexA. In the presence of single-stranded DNA, RecA interacts with LexA causing an autocatalytic cleavage which disrupts the DNA-binding part of LexA, leading to derepression of the SOS regulon and eventually DNA repair. The chain is LexA repressor from Mycolicibacterium paratuberculosis (strain ATCC BAA-968 / K-10) (Mycobacterium paratuberculosis).